Here is a 198-residue protein sequence, read N- to C-terminus: Inosine triphosphate pyrophosphatase (198 aa).

Position 2 is an N-acetylalanine (A2). 14-19 provides a ligand contact to ITP; the sequence is TGNAKK. E44 contacts Mg(2+). ITP contacts are provided by residues K56, 72–73, and K89; that span reads DT. A Phosphoserine modification is found at S146. ITP contacts are provided by residues 149–152, K172, and 177–178; these read FGWD and HR.

This sequence belongs to the HAM1 NTPase family. As to quaternary structure, homodimer. Mg(2+) serves as cofactor. Requires Mn(2+) as cofactor.

It localises to the cytoplasm. The catalysed reaction is ITP + H2O = IMP + diphosphate + H(+). The enzyme catalyses dITP + H2O = dIMP + diphosphate + H(+). It catalyses the reaction XTP + H2O = XMP + diphosphate + H(+). It carries out the reaction N(6)-hydroxy-dATP + H2O = N(6)-hydroxy-dAMP + diphosphate + H(+). Functionally, pyrophosphatase that hydrolyzes the non-canonical purine nucleotides inosine triphosphate (ITP), deoxyinosine triphosphate (dITP) as well as 2'-deoxy-N-6-hydroxylaminopurine triphosphate (dHAPTP) and xanthosine 5'-triphosphate (XTP) to their respective monophosphate derivatives. The enzyme does not distinguish between the deoxy- and ribose forms. Probably excludes non-canonical purines from RNA and DNA precursor pools, thus preventing their incorporation into RNA and DNA and avoiding chromosomal lesions. In Mus musculus (Mouse), this protein is Inosine triphosphate pyrophosphatase (Itpa).